The chain runs to 491 residues: Trypanothione reductase (491 aa).

Residue 35-51 coordinates FAD; that stretch reads DLQKHHGPPHYAALGGT. Cys52 and Cys57 form a disulfide bridge. His461 functions as the Proton acceptor in the catalytic mechanism.

It belongs to the class-I pyridine nucleotide-disulfide oxidoreductase family. As to quaternary structure, homodimer. FAD is required as a cofactor. The N-terminus is blocked.

Its subcellular location is the cytoplasm. It carries out the reaction trypanothione + NADP(+) = trypanothione disulfide + NADPH + H(+). Its function is as follows. Trypanothione is the parasite analog of glutathione; this enzyme is the equivalent of glutathione reductase. This is Trypanothione reductase (TPR) from Crithidia fasciculata.